Here is a 219-residue protein sequence, read N- to C-terminus: 7-carboxy-7-deazaguanine synthase (219 aa).

Substrate is bound by residues 22–24 (IQG) and Arg37. One can recognise a Radical SAM core domain in the interval 28–219 (LVGLPSVFIR…PQVHKCFDLK (192 aa)). The [4Fe-4S] cluster site is built by Cys41, Cys45, and Cys48. Position 81 (Thr81) interacts with substrate. S-adenosyl-L-methionine-binding positions include Gly83 and 130-132 (SPK).

Belongs to the radical SAM superfamily. 7-carboxy-7-deazaguanine synthase family. As to quaternary structure, homodimer. It depends on [4Fe-4S] cluster as a cofactor. Requires S-adenosyl-L-methionine as cofactor. Mg(2+) is required as a cofactor.

The enzyme catalyses 6-carboxy-5,6,7,8-tetrahydropterin + H(+) = 7-carboxy-7-deazaguanine + NH4(+). It participates in purine metabolism; 7-cyano-7-deazaguanine biosynthesis. Catalyzes the complex heterocyclic radical-mediated conversion of 6-carboxy-5,6,7,8-tetrahydropterin (CPH4) to 7-carboxy-7-deazaguanine (CDG), a step common to the biosynthetic pathways of all 7-deazapurine-containing compounds. The polypeptide is 7-carboxy-7-deazaguanine synthase (Aquifex aeolicus (strain VF5)).